Consider the following 327-residue polypeptide: Phenylalanine--tRNA ligase alpha subunit (327 aa).

Glutamate 252 is a Mg(2+) binding site.

Belongs to the class-II aminoacyl-tRNA synthetase family. Phe-tRNA synthetase alpha subunit type 1 subfamily. As to quaternary structure, tetramer of two alpha and two beta subunits. It depends on Mg(2+) as a cofactor.

The protein resides in the cytoplasm. It carries out the reaction tRNA(Phe) + L-phenylalanine + ATP = L-phenylalanyl-tRNA(Phe) + AMP + diphosphate + H(+). The polypeptide is Phenylalanine--tRNA ligase alpha subunit (Tolumonas auensis (strain DSM 9187 / NBRC 110442 / TA 4)).